The primary structure comprises 89 residues: Small ribosomal subunit protein uS17 (89 aa).

It belongs to the universal ribosomal protein uS17 family. Part of the 30S ribosomal subunit.

Functionally, one of the primary rRNA binding proteins, it binds specifically to the 5'-end of 16S ribosomal RNA. The protein is Small ribosomal subunit protein uS17 of Leptospira interrogans serogroup Icterohaemorrhagiae serovar Lai (strain 56601).